Reading from the N-terminus, the 252-residue chain is 5'-nucleotidase SurE (252 aa).

Residues Asp8, Asp9, Ser42, and Asn94 each coordinate a divalent metal cation.

Belongs to the SurE nucleotidase family. A divalent metal cation is required as a cofactor.

The protein localises to the cytoplasm. The enzyme catalyses a ribonucleoside 5'-phosphate + H2O = a ribonucleoside + phosphate. Nucleotidase that shows phosphatase activity on nucleoside 5'-monophosphates. The polypeptide is 5'-nucleotidase SurE (Ehrlichia ruminantium (strain Welgevonden)).